The chain runs to 196 residues: ATP-dependent Clp protease proteolytic subunit (196 aa).

The Nucleophile role is filled by serine 101. Histidine 126 is a catalytic residue.

The protein belongs to the peptidase S14 family. As to quaternary structure, component of the chloroplastic Clp protease core complex.

It is found in the plastid. The protein localises to the chloroplast stroma. It carries out the reaction Hydrolysis of proteins to small peptides in the presence of ATP and magnesium. alpha-casein is the usual test substrate. In the absence of ATP, only oligopeptides shorter than five residues are hydrolyzed (such as succinyl-Leu-Tyr-|-NHMec, and Leu-Tyr-Leu-|-Tyr-Trp, in which cleavage of the -Tyr-|-Leu- and -Tyr-|-Trp bonds also occurs).. Its function is as follows. Cleaves peptides in various proteins in a process that requires ATP hydrolysis. Has a chymotrypsin-like activity. Plays a major role in the degradation of misfolded proteins. The protein is ATP-dependent Clp protease proteolytic subunit of Coffea arabica (Arabian coffee).